The chain runs to 295 residues: Probable CBASS effector molecule IK1_05631 (295 aa).

A run of 4 helical transmembrane segments spans residues 26–46 (IFYA…ISIY), 56–76 (SNTG…AYQI), 167–187 (ILLF…GFFV), and 190–210 (SMQE…IYGF).

The protein resides in the cell membrane. In terms of biological role, effector protein of a CBASS antiviral system. CBASS (cyclic oligonucleotide-based antiphage signaling system) provides immunity against bacteriophage. The CD-NTase protein synthesizes cyclic nucleotides in response to infection; these serve as specific second messenger signals. The signals activate a diverse range of effectors, leading to bacterial cell death and thus abortive phage infection. A type I-B CBASS system. Its function is as follows. Protects B.subtilis against phage infection. When IK1_05630 and IK1_05631 are introduced in B.subtilis BEST7003 there is 1000-fold protection against phage SBSphiC. Both genes are required for protection. Activation leads to bacterial cell lysis and death, which occurs before the phage has finished its replication cycle, thus protecting non-infected bacteria by aborting the phage infection and preventing its propagation. The sequence is that of Probable CBASS effector molecule IK1_05631 from Bacillus cereus (strain VD146).